A 277-amino-acid chain; its full sequence is Large ribosomal subunit protein uL2 (277 aa).

Basic residues-rich tracts occupy residues 210-219 (RARWAGKRPQ) and 259-277 (TRSKKARSNKFIVRSRNKK). Positions 210–277 (RARWAGKRPQ…KFIVRSRNKK (68 aa)) are disordered.

The protein belongs to the universal ribosomal protein uL2 family. As to quaternary structure, part of the 50S ribosomal subunit. Forms a bridge to the 30S subunit in the 70S ribosome.

In terms of biological role, one of the primary rRNA binding proteins. Required for association of the 30S and 50S subunits to form the 70S ribosome, for tRNA binding and peptide bond formation. It has been suggested to have peptidyltransferase activity; this is somewhat controversial. Makes several contacts with the 16S rRNA in the 70S ribosome. The chain is Large ribosomal subunit protein uL2 from Ligilactobacillus salivarius (strain UCC118) (Lactobacillus salivarius).